We begin with the raw amino-acid sequence, 115 residues long: NADH-ubiquinone oxidoreductase chain 3 (115 aa).

The next 3 membrane-spanning stretches (helical) occupy residues 3–23 (FVLA…LTFW), 55–75 (FFLV…LLPL), and 84–104 (LPLM…GLTY).

Belongs to the complex I subunit 3 family. As to quaternary structure, core subunit of respiratory chain NADH dehydrogenase (Complex I) which is composed of 45 different subunits. Interacts with TMEM186. Interacts with TMEM242.

The protein resides in the mitochondrion inner membrane. The catalysed reaction is a ubiquinone + NADH + 5 H(+)(in) = a ubiquinol + NAD(+) + 4 H(+)(out). In terms of biological role, core subunit of the mitochondrial membrane respiratory chain NADH dehydrogenase (Complex I) which catalyzes electron transfer from NADH through the respiratory chain, using ubiquinone as an electron acceptor. Essential for the catalytic activity of complex I. This chain is NADH-ubiquinone oxidoreductase chain 3, found in Pongo pygmaeus (Bornean orangutan).